The sequence spans 417 residues: Dihydroorotase (417 aa).

Residues histidine 60 and histidine 62 each coordinate Zn(2+). Residues 62-64 (HLR) and asparagine 94 each bind substrate. Lysine 138, histidine 167, histidine 207, and aspartate 275 together coordinate Zn(2+). Residue lysine 138 is modified to N6-carboxylysine. The active site involves aspartate 275. Substrate-binding positions include histidine 279 and 289–290 (AG).

The protein belongs to the metallo-dependent hydrolases superfamily. DHOase family. Class I DHOase subfamily. Requires Zn(2+) as cofactor.

The enzyme catalyses (S)-dihydroorotate + H2O = N-carbamoyl-L-aspartate + H(+). It participates in pyrimidine metabolism; UMP biosynthesis via de novo pathway; (S)-dihydroorotate from bicarbonate: step 3/3. In terms of biological role, catalyzes the reversible cyclization of carbamoyl aspartate to dihydroorotate. The polypeptide is Dihydroorotase (Pyrococcus horikoshii (strain ATCC 700860 / DSM 12428 / JCM 9974 / NBRC 100139 / OT-3)).